Consider the following 357-residue polypeptide: Large ribosomal subunit protein mL45 (357 aa).

A disordered region spans residues 333–357 (EAKALPLRTTEKLEEAKKEKEQQEI). Residues 341–357 (TTEKLEEAKKEKEQQEI) are compositionally biased toward basic and acidic residues.

Belongs to the mitochondrion-specific ribosomal protein mL45 family.

It is found in the mitochondrion. The chain is Large ribosomal subunit protein mL45 (mrpl-45) from Caenorhabditis elegans.